The chain runs to 153 residues: Ribosome maturation factor RimP (153 aa).

This sequence belongs to the RimP family.

It localises to the cytoplasm. Its function is as follows. Required for maturation of 30S ribosomal subunits. The protein is Ribosome maturation factor RimP of Desulforamulus reducens (strain ATCC BAA-1160 / DSM 100696 / MI-1) (Desulfotomaculum reducens).